The sequence spans 177 residues: DELTA-stichotoxin-Hmg2b (177 aa).

Residues 3–12 (ALAGTIIAGA) form a plays an important role in the hemolytic activity region. The interval 11–30 (GASLGFQILDKVLGELGKVS) is N-terminal region. Positions 54, 87, 105, 107, 133, 137, and 138 each coordinate phosphocholine.

Belongs to the actinoporin family. Sea anemone subfamily. In terms of assembly, octamer or nonamer in membranes. Monomer in the soluble state.

The protein resides in the secreted. It is found in the nematocyst. It localises to the target cell membrane. Pore-forming protein that forms cations-selective hydrophilic pores of around 1 nm and causes cytolysis. Pore formation is a multi-step process that involves specific recognition of membrane sphingomyelin (but neither cholesterol nor phosphatidylcholine) using aromatic rich region and adjacent phosphocholine (POC) binding site, firm binding to the membrane (mainly driven by hydrophobic interactions) accompanied by the transfer of the N-terminal region to the lipid-water interface and finally pore formation after oligomerization of monomers This toxin shows hemolytic activity. The chain is DELTA-stichotoxin-Hmg2b from Heteractis magnifica (Magnificent sea anemone).